We begin with the raw amino-acid sequence, 273 residues long: Putative phosphoenolpyruvate synthase regulatory protein (273 aa).

154–161 is a binding site for ADP; that stretch reads GVSRSGKT.

This sequence belongs to the pyruvate, phosphate/water dikinase regulatory protein family. PSRP subfamily.

The enzyme catalyses [pyruvate, water dikinase] + ADP = [pyruvate, water dikinase]-phosphate + AMP + H(+). It carries out the reaction [pyruvate, water dikinase]-phosphate + phosphate + H(+) = [pyruvate, water dikinase] + diphosphate. In terms of biological role, bifunctional serine/threonine kinase and phosphorylase involved in the regulation of the phosphoenolpyruvate synthase (PEPS) by catalyzing its phosphorylation/dephosphorylation. The chain is Putative phosphoenolpyruvate synthase regulatory protein from Neisseria meningitidis serogroup B (strain ATCC BAA-335 / MC58).